We begin with the raw amino-acid sequence, 200 residues long: Molybdenum cofactor guanylyltransferase (200 aa).

GTP-binding positions include 10 to 12, lysine 23, asparagine 51, aspartate 69, and aspartate 99; that span reads LAG. Aspartate 99 provides a ligand contact to Mg(2+).

This sequence belongs to the MobA family. As to quaternary structure, monomer. It depends on Mg(2+) as a cofactor.

The protein resides in the cytoplasm. The enzyme catalyses Mo-molybdopterin + GTP + H(+) = Mo-molybdopterin guanine dinucleotide + diphosphate. Functionally, transfers a GMP moiety from GTP to Mo-molybdopterin (Mo-MPT) cofactor (Moco or molybdenum cofactor) to form Mo-molybdopterin guanine dinucleotide (Mo-MGD) cofactor. In Shewanella halifaxensis (strain HAW-EB4), this protein is Molybdenum cofactor guanylyltransferase.